We begin with the raw amino-acid sequence, 178 residues long: ATP synthase subunit delta (178 aa).

The protein belongs to the ATPase delta chain family. As to quaternary structure, F-type ATPases have 2 components, F(1) - the catalytic core - and F(0) - the membrane proton channel. F(1) has five subunits: alpha(3), beta(3), gamma(1), delta(1), epsilon(1). F(0) has three main subunits: a(1), b(2) and c(10-14). The alpha and beta chains form an alternating ring which encloses part of the gamma chain. F(1) is attached to F(0) by a central stalk formed by the gamma and epsilon chains, while a peripheral stalk is formed by the delta and b chains.

It localises to the cell inner membrane. F(1)F(0) ATP synthase produces ATP from ADP in the presence of a proton or sodium gradient. F-type ATPases consist of two structural domains, F(1) containing the extramembraneous catalytic core and F(0) containing the membrane proton channel, linked together by a central stalk and a peripheral stalk. During catalysis, ATP synthesis in the catalytic domain of F(1) is coupled via a rotary mechanism of the central stalk subunits to proton translocation. Functionally, this protein is part of the stalk that links CF(0) to CF(1). It either transmits conformational changes from CF(0) to CF(1) or is implicated in proton conduction. In Methylobacillus flagellatus (strain ATCC 51484 / DSM 6875 / VKM B-1610 / KT), this protein is ATP synthase subunit delta.